A 553-amino-acid polypeptide reads, in one-letter code: 5'-nucleotidase (553 aa).

A signal peptide spans 1–21 (MKQRLIVKTALSAAILATLAG). C22 is lipidated: N-palmitoyl cysteine. C22 carries S-diacylglycerol cysteine lipidation. D45, H47, D88, N120, H221, H256, and Q258 together coordinate a divalent metal cation. Substrate contacts are provided by residues F432 and 501–507 (YNAAGGD).

It belongs to the 5'-nucleotidase family. Chloride is required as a cofactor. Mg(2+) serves as cofactor.

Its subcellular location is the cell outer membrane. The enzyme catalyses a ribonucleoside 5'-phosphate + H2O = a ribonucleoside + phosphate. Degradation of extracellular 5'-nucleotides for nutritional needs. This is 5'-nucleotidase (nutA) from Vibrio vulnificus (strain CMCP6).